Here is a 67-residue protein sequence, read N- to C-terminus: Large ribosomal subunit protein bL35 (67 aa).

The segment at 22–52 (VLAGPGKKRHNLSARSQKAKRQNRGSQVLTH) is disordered. Residues 27–44 (GKKRHNLSARSQKAKRQN) are compositionally biased toward basic residues.

Belongs to the bacterial ribosomal protein bL35 family.

This is Large ribosomal subunit protein bL35 from Granulibacter bethesdensis (strain ATCC BAA-1260 / CGDNIH1).